A 131-amino-acid chain; its full sequence is Agouti-signaling protein (131 aa).

Positions 1–22 (MDVTRLLLATLVGFLCFFTVHS) are cleaved as a signal peptide. The N-linked (GlcNAc...) asparagine glycan is linked to N39. The segment at 58 to 100 (KSKKISRKEAEKRKRSSKKKASMKKVARPPPPSPCVATRDSCK) is disordered. Residues 70–84 (RKRSSKKKASMKKVA) show a composition bias toward basic residues. Disulfide bonds link C92-C107, C99-C113, C106-C124, C110-C131, and C115-C122. The Agouti domain maps to 92 to 131 (CVATRDSCKPPAPACCDPCASCQCRFFGSACTCRVLNPNC).

Epithelial cells of the hair follicles and the epidermis.

The protein localises to the secreted. Functionally, involved in the regulation of melanogenesis. The binding of ASP to MC1R precludes alpha-MSH initiated signaling and thus blocks production of cAMP, leading to a down-regulation of eumelanogenesis (brown/black pigment) and thus increasing synthesis of pheomelanin (yellow/red pigment). Causes hair follicle melanocytes to synthesize phaeomelanin instead of black or brown pigment eumelanin and produces hairs with a subapical yellow band on an otherwise black or brown background when expressed during the mid-portion of hair growth. The chain is Agouti-signaling protein (Asip) from Mus musculus (Mouse).